A 330-amino-acid chain; its full sequence is Calponin-3 (330 aa).

Lysine 23 bears the N6-acetyllysine mark. Residues 26–130 enclose the Calponin-homology (CH) domain; it reads QQAEEDLRNW…TLVALAGLAK (105 aa). Lysine 158 is subject to N6-methyllysine. Calponin-like repeat units follow at residues 164–189, 204–229, and 243–268; these read IGLQ…RHLY, ISLQ…RDIY, and ISLQ…RQVY. The segment at 279–330 is disordered; sequence PVIHNGSQGTGTNGSEISDSDYQAEYPDEYHGEYPDDYPREYQYGDDQGIDY. Positions 306–318 are enriched in basic and acidic residues; the sequence is DEYHGEYPDDYPR.

This sequence belongs to the calponin family.

Thin filament-associated protein that is implicated in the regulation and modulation of smooth muscle contraction. It is capable of binding to actin, calmodulin and tropomyosin. The interaction of calponin with actin inhibits the actomyosin Mg-ATPase activity. The polypeptide is Calponin-3 (Cnn3) (Mus musculus (Mouse)).